The primary structure comprises 1232 residues: MVHPVQVGKRTRMSFSRLKEVGQMPNLIEVQLDSYDWFLKEGLQEVFDDINPIQDYTGNLNLEFVGYKLDLDSIKYSVEECKERDSTYAAPLKVKVRLLNKETGEIKEQEVFMGDFPLMTEQGTFIINGAERVIVSQLVRSPGVYYDMTVDKTGSKLFSATVIPNRGAWLEYETDSNNIIYVRIDKTRKLPITILARALGYGTDAEIIEFFGEDERLKATIEKDNTKTREEALLEIYKRLRPGEPPTVDSAESLIESLFFDAKRYDLSRVGRYKFNKKLAIHLRITNQIADQDIVNPQTGEILVQKGEKIDKDKAIEIQNCGINEVYIKIDDKSFKVIGNHFVDIHSLVPFDISDLNIKEYVFYPVLKEILDNYADEESIKEEIRKNIYRLIPKHIIREDIYATINYELALSYDIGYKDDIDHLGNRRLRSVGELLQNQFRIGLSRMERVVKERMTIQDQEVITPQALINIRPVAASIKEFFGSSQLSQFMDQTNPLSELTHKRRLSALGPGGLSRERAGFEVRDVHHSHYGRMCPIETPEGPNIGLINSLATFAKVNEYGFIETPYRRIDPKNKRATNDIVYMTADEEDLYVIARSDEPIDENGYFIDDKVTVRAKEEVLVVPVSEVEYMDISPRQLVSVATAMIPFLENDDASRALMGSNMQRQAVPLLKPQAPIVGTGIEYKAATDSGVLPKAKNAGTVVYVSADEIRVRRDSDGGIDKYKLLKFKRSNQGTCINQRPIVSKGEVVAKETLLADGPSTDLGEIALGKNILMGFITWEGYNYEDAMLISEQLVKEDVFTSIHIEEYEAEARDTKLGPEEITRDIPNVGEEALKDIDERGIIRIGAEVRSGDILVGKVTPKGETELTAEERLLRAIFGEKAREVRDTSLRVPHGEAGIIVDVKIFTRENGDELPPGVNKLVRCYIAQKRKISVGDKMAGRHGNKGVISRVLPEEDMPFLPDGRPLQICLNPLGVPSRMNIGQVLEVHLGLAASKLGWHIATPVFDGAIESDIVDCLRKAGYSEDGKTVLYDGRTGEPFDNRVTVGYMYILKLAHLVDDKIHARSTGPYSLVTQQPLGGKAQFGGQRFGEMEVWALEAYGAAHTLQEILTVKSDDVVGRVKTYEAIVKGENIPEPGVPESFKVLIKELQALCLDVKVLNDDNQEIKLKESVDEDADELEVNIEGTENQPEEKEEKEKEDSDEYDDLREEDVEPDLEELSLDDLDLDDFGDEH.

The interval 1170–1232 (SVDEDADELE…LDLDDFGDEH (63 aa)) is disordered. Residues 1171–1180 (VDEDADELEV) show a composition bias toward acidic residues. Residues 1189-1198 (PEEKEEKEKE) show a composition bias toward basic and acidic residues. Residues 1199 to 1232 (DSDEYDDLREEDVEPDLEELSLDDLDLDDFGDEH) are compositionally biased toward acidic residues.

Belongs to the RNA polymerase beta chain family. As to quaternary structure, the RNAP catalytic core consists of 2 alpha, 1 beta, 1 beta' and 1 omega subunit. When a sigma factor is associated with the core the holoenzyme is formed, which can initiate transcription.

The enzyme catalyses RNA(n) + a ribonucleoside 5'-triphosphate = RNA(n+1) + diphosphate. Its function is as follows. DNA-dependent RNA polymerase catalyzes the transcription of DNA into RNA using the four ribonucleoside triphosphates as substrates. This Clostridium botulinum (strain Hall / ATCC 3502 / NCTC 13319 / Type A) protein is DNA-directed RNA polymerase subunit beta.